The following is a 255-amino-acid chain: Type III pantothenate kinase (255 aa).

Residue 6 to 13 (DVGNSYTM) coordinates ATP. 107-110 (GADR) contributes to the substrate binding site. The Proton acceptor role is filled by aspartate 109. Aspartate 129 serves as a coordination point for K(+). Threonine 132 provides a ligand contact to ATP. Position 183 (threonine 183) interacts with substrate.

It belongs to the type III pantothenate kinase family. Homodimer. NH4(+) is required as a cofactor. Requires K(+) as cofactor.

Its subcellular location is the cytoplasm. It catalyses the reaction (R)-pantothenate + ATP = (R)-4'-phosphopantothenate + ADP + H(+). It functions in the pathway cofactor biosynthesis; coenzyme A biosynthesis; CoA from (R)-pantothenate: step 1/5. Its function is as follows. Catalyzes the phosphorylation of pantothenate (Pan), the first step in CoA biosynthesis. The sequence is that of Type III pantothenate kinase from Petrotoga mobilis (strain DSM 10674 / SJ95).